The sequence spans 105 residues: Small ribosomal subunit protein uS10 (105 aa).

This sequence belongs to the universal ribosomal protein uS10 family. Part of the 30S ribosomal subunit.

Its function is as follows. Involved in the binding of tRNA to the ribosomes. In Francisella philomiragia subsp. philomiragia (strain ATCC 25017 / CCUG 19701 / FSC 153 / O#319-036), this protein is Small ribosomal subunit protein uS10.